The sequence spans 64 residues: U-myrmeciitoxin(01)-Mg4b (64 aa).

Residues 1 to 25 (MGKIFFFVLMIAIIGSTFLIEEALG) form the signal peptide.

The protein belongs to the ant myrmeciitoxin-01 family. In terms of assembly, homodimer; disulfide-linked. Contains 2 intrachain disulfide bonds (per chain) and 1 interchain disulfide bond. Expressed by the venom gland.

It is found in the secreted. Its function is as follows. May have antimicrobial properties, like most ant linear peptides. The protein is U-myrmeciitoxin(01)-Mg4b of Myrmecia gulosa (Red bulldog ant).